Reading from the N-terminus, the 768-residue chain is Vitamin B12-dependent ribonucleoside-diphosphate reductase (768 aa).

The 95-residue stretch at 3 to 97 (KEVVKRDGTV…LYREKRRAIR (95 aa)) folds into the ATP-cone domain. Residues S234, 249–250 (AC), G278, 432–436 (NPCGE), and 579–583 (PTGTI) each bind substrate. A disulfide bridge links C250 with C445. N432 functions as the Proton acceptor in the catalytic mechanism. C434 serves as the catalytic Cysteine radical intermediate. The active-site Proton acceptor is the E436.

Belongs to the ribonucleoside diphosphate reductase class-2 family. In terms of assembly, monomer. The cofactor is adenosylcob(III)alamin.

The enzyme catalyses a 2'-deoxyribonucleoside 5'-diphosphate + [thioredoxin]-disulfide + H2O = a ribonucleoside 5'-diphosphate + [thioredoxin]-dithiol. Functionally, provides the precursors necessary for DNA synthesis. Catalyzes the biosynthesis of deoxyribonucleotides from the corresponding ribonucleotides. This is Vitamin B12-dependent ribonucleoside-diphosphate reductase from Thermoplasma acidophilum (strain ATCC 25905 / DSM 1728 / JCM 9062 / NBRC 15155 / AMRC-C165).